The primary structure comprises 213 residues: ATP phosphoribosyltransferase (213 aa).

It belongs to the ATP phosphoribosyltransferase family. Short subfamily. In terms of assembly, heteromultimer composed of HisG and HisZ subunits.

The protein localises to the cytoplasm. The enzyme catalyses 1-(5-phospho-beta-D-ribosyl)-ATP + diphosphate = 5-phospho-alpha-D-ribose 1-diphosphate + ATP. It participates in amino-acid biosynthesis; L-histidine biosynthesis; L-histidine from 5-phospho-alpha-D-ribose 1-diphosphate: step 1/9. In terms of biological role, catalyzes the condensation of ATP and 5-phosphoribose 1-diphosphate to form N'-(5'-phosphoribosyl)-ATP (PR-ATP). Has a crucial role in the pathway because the rate of histidine biosynthesis seems to be controlled primarily by regulation of HisG enzymatic activity. The sequence is that of ATP phosphoribosyltransferase from Listeria monocytogenes serotype 4a (strain HCC23).